The sequence spans 267 residues: Orotidine 5'-phosphate decarboxylase (267 aa).

Substrate-binding positions include aspartate 38, 60–62, 92–101, tyrosine 218, and arginine 236; these read KTH and DRKFADIGNT. The active-site Proton donor is the lysine 94.

This sequence belongs to the OMP decarboxylase family.

The catalysed reaction is orotidine 5'-phosphate + H(+) = UMP + CO2. The protein operates within pyrimidine metabolism; UMP biosynthesis via de novo pathway; UMP from orotate: step 2/2. The polypeptide is Orotidine 5'-phosphate decarboxylase (URA3) (Debaryomyces hansenii (strain ATCC 36239 / CBS 767 / BCRC 21394 / JCM 1990 / NBRC 0083 / IGC 2968) (Yeast)).